A 120-amino-acid polypeptide reads, in one-letter code: Large ribosomal subunit protein uL18 (120 aa).

A disordered region spans residues 1–25 (MKQTRTAARQSRHQRIRRKVKGTSD). The span at 10-21 (QSRHQRIRRKVK) shows a compositional bias: basic residues.

It belongs to the universal ribosomal protein uL18 family. As to quaternary structure, part of the 50S ribosomal subunit; part of the 5S rRNA/L5/L18/L25 subcomplex. Contacts the 5S and 23S rRNAs.

In terms of biological role, this is one of the proteins that bind and probably mediate the attachment of the 5S RNA into the large ribosomal subunit, where it forms part of the central protuberance. The chain is Large ribosomal subunit protein uL18 from Thermosynechococcus vestitus (strain NIES-2133 / IAM M-273 / BP-1).